A 1218-amino-acid polypeptide reads, in one-letter code: MRSPRTRGRSGRPLSLLLALLCALRAKVCGASGQFELEILSMQNVNGELQNGNCCGGARNPGDRKCTRDECDTYFKVCLKEYQSRVTAGGPCSFGSGSTPVIGGNTFNLKASRGNDRNRIVLPFSFAWPRSYTLLVEAWDSSNDTVQPDSIIEKASHSGMINPSRQWQTLKQNTGVAHFEYQIRVTCDDYYYGFGCNKFCRPRDDFFGHYACDQNGNKTCMEGWMGPECNRAICRQGCSPKHGSCKLPGDCRCQYGWQGLYCDKCIPHPGCVHGICNEPWQCLCETNWGGQLCDKDLNYCGTHQPCLNGGTCSNTGPDKYQCSCPEGYSGPNCEIAEHACLSDPCHNRGSCKETSLGFECECSPGWTGPTCSTNIDDCSPNNCSHGGTCQDLVNGFKCVCPPQWTGKTCQLDANECEAKPCVNAKSCKNLIASYYCDCLPGWMGQNCDININDCLGQCQNDASCRDLVNGYRCICPPGYAGDHCERDIDECASNPCLNGGHCQNEINRFQCLCPTGFSGNLCQLDIDYCEPNPCQNGAQCYNRASDYFCKCPEDYEGKNCSHLKDHCRTTPCEVIDSCTVAMASNDTPEGVRYISSNVCGPHGKCKSQSGGKFTCDCNKGFTGTYCHENINDCESNPCRNGGTCIDGVNSYKCICSDGWEGAYCETNINDCSQNPCHNGGTCRDLVNDFYCDCKNGWKGKTCHSRDSQCDEATCNNGGTCYDEGDAFKCMCPGGWEGTTCNIARNSSCLPNPCHNGGTCVVNGESFTCVCKEGWEGPICAQNTNDCSPHPCYNSGTCVDGDNWYRCECAPGFAGPDCRININECQSSPCAFGATCVDEINGYRCVCPPGHSGAKCQEVSGRPCITMGSVIPDGAKWDDDCNTCQCLNGRIACSKVWCGPRPCLLHKGHSECPSGQSCIPILDDQCFVHPCTGVGECRSSSLQPVKTKCTSDSYYQDNCANITFTFNKEMMSPGLTTEHICSELRNLNILKNVSAEYSIYIACEPSPSANNEIHVAISAEDIRDDGNPIKEITDKIIDLVSKRDGNSSLIAAVAEVRVQRRPLKNRTDFLVPLLSSVLTVAWICCLVTAFYWCLRKRRKPGSHTHSASEDNTTNNVREQLNQIKNPIEKHGANTVPIKDYENKNSKMSKIRTHNSEVEEDDMDKHQQKARFAKQPAYTLVDREEKPPNGTPTKHPNWTNKQDNRDLESAQSLNRMEYIV.

The signal sequence occupies residues 1–33; sequence MRSPRTRGRSGRPLSLLLALLCALRAKVCGASG. Topologically, residues 34-1067 are extracellular; that stretch reads QFELEILSMQ…QRRPLKNRTD (1034 aa). A glycan (N-linked (GlcNAc...) asparagine) is linked at asparagine 143. The DSL domain occupies 185 to 229; it reads VTCDDYYYGFGCNKFCRPRDDFFGHYACDQNGNKTCMEGWMGPEC. 2 disulfides stabilise this stretch: cysteine 187–cysteine 196 and cysteine 200–cysteine 212. The important for interaction with NOTCH1 stretch occupies residues 199 to 207; that stretch reads FCRPRDDFF. A glycan (N-linked (GlcNAc...) asparagine) is linked at asparagine 217. Cystine bridges form between cysteine 220–cysteine 229, cysteine 234–cysteine 245, cysteine 238–cysteine 251, cysteine 253–cysteine 262, cysteine 265–cysteine 276, cysteine 271–cysteine 282, cysteine 284–cysteine 293, cysteine 300–cysteine 312, cysteine 306–cysteine 322, cysteine 324–cysteine 333, cysteine 340–cysteine 351, cysteine 345–cysteine 360, cysteine 362–cysteine 371, cysteine 378–cysteine 389, cysteine 383–cysteine 398, cysteine 400–cysteine 409, cysteine 416–cysteine 427, cysteine 421–cysteine 436, cysteine 438–cysteine 447, cysteine 454–cysteine 464, cysteine 458–cysteine 473, cysteine 475–cysteine 484, cysteine 491–cysteine 502, cysteine 496–cysteine 511, cysteine 513–cysteine 522, cysteine 529–cysteine 540, cysteine 534–cysteine 549, cysteine 551–cysteine 560, cysteine 578–cysteine 605, cysteine 599–cysteine 615, cysteine 617–cysteine 626, cysteine 633–cysteine 644, cysteine 638–cysteine 653, cysteine 655–cysteine 664, cysteine 671–cysteine 682, cysteine 676–cysteine 691, cysteine 693–cysteine 702, cysteine 709–cysteine 720, cysteine 714–cysteine 729, and cysteine 731–cysteine 740. The region spanning 230–263 is the EGF-like 1 domain; that stretch reads NRAICRQGCSPKHGSCKLPGDCRCQYGWQGLYCD. One can recognise an EGF-like 2; atypical domain in the interval 264–294; the sequence is KCIPHPGCVHGICNEPWQCLCETNWGGQLCD. EGF-like domains follow at residues 296 to 334 and 336 to 372; these read DLNY…PNCE and AEHA…PTCS. Residues 374-410 form the EGF-like 5; calcium-binding domain; sequence NIDDCSPNNCSHGGTCQDLVNGFKCVCPPQWTGKTCQ. The N-linked (GlcNAc...) asparagine glycan is linked to asparagine 382. In terms of domain architecture, EGF-like 6; calcium-binding spans 412 to 448; it reads DANECEAKPCVNAKSCKNLIASYYCDCLPGWMGQNCD. An EGF-like 7; calcium-binding domain is found at 450–485; that stretch reads NINDCLGQCQNDASCRDLVNGYRCICPPGYAGDHCE. Residues 487-523 form the EGF-like 8; calcium-binding domain; the sequence is DIDECASNPCLNGGHCQNEINRFQCLCPTGFSGNLCQ. EGF-like domains follow at residues 525 to 561 and 586 to 627; these read DIDY…KNCS and DTPE…TYCH. N-linked (GlcNAc...) asparagine glycosylation is present at asparagine 559. Residues 629–665 enclose the EGF-like 11; calcium-binding domain; that stretch reads NINDCESNPCRNGGTCIDGVNSYKCICSDGWEGAYCE. Residues 667-703 form the EGF-like 12; calcium-binding domain; it reads NINDCSQNPCHNGGTCRDLVNDFYCDCKNGWKGKTCH. EGF-like domains lie at 705 to 741 and 744 to 780; these read RDSQ…TTCN and RNSS…PICA. An N-linked (GlcNAc...) asparagine glycan is attached at asparagine 745. 9 cysteine pairs are disulfide-bonded: cysteine 748/cysteine 759, cysteine 753/cysteine 768, cysteine 770/cysteine 779, cysteine 786/cysteine 797, cysteine 791/cysteine 806, cysteine 808/cysteine 817, cysteine 824/cysteine 835, cysteine 829/cysteine 844, and cysteine 846/cysteine 855. The 37-residue stretch at 782–818 folds into the EGF-like 15; calcium-binding domain; that stretch reads NTNDCSPHPCYNSGTCVDGDNWYRCECAPGFAGPDCR. Residues 820–856 form the EGF-like 16; calcium-binding domain; sequence NINECQSSPCAFGATCVDEINGYRCVCPPGHSGAKCQ. Residues asparagine 960, asparagine 991, asparagine 1045, and asparagine 1064 are each glycosylated (N-linked (GlcNAc...) asparagine). The chain crosses the membrane as a helical span at residues 1068 to 1093; it reads FLVPLLSSVLTVAWICCLVTAFYWCL. Residues 1094–1218 are Cytoplasmic-facing; that stretch reads RKRRKPGSHT…QSLNRMEYIV (125 aa). Positions 1152–1218 are disordered; that stretch reads HNSEVEEDDM…QSLNRMEYIV (67 aa). Residues 1189 to 1199 are compositionally biased toward polar residues; sequence TPTKHPNWTNK.

Interacts with NOTCH2 and NOTCH3. Interacts with NOTCH1 (in the presence of calcium ions). As to expression, widely expressed in adult and fetal tissues. In cervix epithelium expressed in undifferentiated subcolumnar reserve cells and squamous metaplasia. Expression is up-regulated in cervical squamous cell carcinoma. Expressed in bone marrow cell line HS-27a which supports the long-term maintenance of immature progenitor cells.

Its subcellular location is the membrane. It localises to the cell membrane. In terms of biological role, ligand for multiple Notch receptors and involved in the mediation of Notch signaling. May be involved in cell-fate decisions during hematopoiesis. Seems to be involved in early and late stages of mammalian cardiovascular development. Inhibits myoblast differentiation. Enhances fibroblast growth factor-induced angiogenesis (in vitro). This is Protein jagged-1 (JAG1) from Homo sapiens (Human).